Reading from the N-terminus, the 754-residue chain is Peptidyl-prolyl cis-trans isomerase G (754 aa).

A PPIase cyclophilin-type domain is found at 11-176; sequence FFDIAINNQP…AEVRILSCGE (166 aa). Residues 182–193 are compositionally biased toward basic residues; it reads KVKKEEKKRHKS. A disordered region spans residues 182–754; sequence KVKKEEKKRH…SPGTDEDKSG (573 aa). Residues 194 to 216 are compositionally biased toward low complexity; it reads SSSSSSSSSDSDSSSDSQSSSDS. The span at 228–253 shows a compositional bias: basic residues; it reads KKRKKKHRKNSRKHKKEKKKRKKSKK. 5 positions are modified to phosphoserine: S254, S256, S257, S259, and S290. The span at 292 to 310 shows a compositional bias: basic and acidic residues; that stretch reads PKADEKERKNREREREREC. S315 carries the phosphoserine modification. Over residues 329–347 the composition is skewed to basic residues; sequence SGRKIKGRGPRRYRTPSRS. Basic and acidic residues-rich tracts occupy residues 348–368 and 379–449; these read RSRD…EMQR and RWIK…DKYK. S356 is subject to Phosphoserine. The residue at position 358 (T358) is a Phosphothreonine. S386 bears the Phosphoserine mark. K392 is covalently cross-linked (Glycyl lysine isopeptide (Lys-Gly) (interchain with G-Cter in SUMO2)). Phosphoserine occurs at positions 397, 413, and 415. Basic residues predominate over residues 450 to 462; it reads NKVKKRAKSKSRS. Composition is skewed to basic and acidic residues over residues 463–553 and 578–599; these read KSKE…DITK and RTHD…QEYR. A compositionally biased stretch (basic residues) spans 616–627; the sequence is SRSKDRRRRRRD. The span at 628-686 shows a compositional bias: basic and acidic residues; the sequence is SRSSEREESQSRNKDKYRNQESKSSHRKENSESEKRMYSKSRDHNSSNNSREKKADRDQ. A phosphoserine mark is found at S687 and S690. The span at 687 to 698 shows a compositional bias: polar residues; the sequence is SPFSKIKQSSQD. K693 participates in a covalent cross-link: Glycyl lysine isopeptide (Lys-Gly) (interchain with G-Cter in SUMO2). Phosphoserine is present on residues S696, S744, and S745. Over residues 707-754 the composition is skewed to basic and acidic residues; sequence KNKEDEKIRSSVEKENQKSKGQENDHVHEKNKKFDHESSPGTDEDKSG. At T748 the chain carries Phosphothreonine. A Phosphoserine modification is found at S753.

In terms of assembly, interacts with CLK1, PNN and with the phosphorylated C-terminal domain of RNA polymerase II. As to expression, ubiquitous.

It is found in the nucleus matrix. It localises to the nucleus speckle. The enzyme catalyses [protein]-peptidylproline (omega=180) = [protein]-peptidylproline (omega=0). Inhibited by cyclosporin A (CsA). Its function is as follows. PPIase that catalyzes the cis-trans isomerization of proline imidic peptide bonds in oligopeptides and may therefore assist protein folding. May be implicated in the folding, transport, and assembly of proteins. May play an important role in the regulation of pre-mRNA splicing. This is Peptidyl-prolyl cis-trans isomerase G (PPIG) from Homo sapiens (Human).